A 163-amino-acid polypeptide reads, in one-letter code: CASP-like protein 1C2 (163 aa).

Residues 1-7 (MAKLHRL) lie on the Cytoplasmic side of the membrane. The chain crosses the membrane as a helical span at residues 8-28 (ISAVLRLAAAGAAAAAAVIMV). At 29–50 (TSHETTSLFGIEMEAKYSYTPS) the chain is on the extracellular side. The helical transmembrane segment at 51-71 (FVFFVVAFAVTFAYSLLAAVL) threads the bilayer. The Cytoplasmic portion of the chain corresponds to 72–80 (VRPGTTASR). A helical transmembrane segment spans residues 81-101 (LVLLSDVTVGMLLTGAVAATG). Residues 102–129 (AISQVGKSGNEHAGWLPICAQVQAYCGH) lie on the Extracellular side of the membrane. Residues 130-150 (VMGALIAGFVSLLLYFLIIMY) traverse the membrane as a helical segment. The Cytoplasmic segment spans residues 151-163 (SLHAVAEPLCSCH).

This sequence belongs to the Casparian strip membrane proteins (CASP) family. In terms of assembly, homodimer and heterodimers.

It is found in the cell membrane. The chain is CASP-like protein 1C2 from Zea mays (Maize).